We begin with the raw amino-acid sequence, 539 residues long: Lysophospholipid acyltransferase LPEAT2 (539 aa).

The helical transmembrane segment at 93–113 (LVICLPIALIRLVLFAASLAV) threads the bilayer. Residues 178 to 183 (HVSYIE) carry the HXXXXD motif motif. EF-hand domains follow at residues 426-455 (KRIFEFIDVEKVGSITFKQFLFASGHVLTQ), 457-492 (LFKQTCELAFSHCDADGDGYITIQELGEALKNTIPN), and 493-528 (LNKDEIRGMYHLLDDDQDQRISQNDLLSCLRRNPLL). Ca(2+) is bound by residues aspartate 470, aspartate 472, aspartate 474, tyrosine 476, glutamate 481, aspartate 506, aspartate 508, aspartate 510, arginine 512, and aspartate 517.

This sequence belongs to the 1-acyl-sn-glycerol-3-phosphate acyltransferase family.

The protein resides in the golgi apparatus membrane. Its subcellular location is the late endosome membrane. It carries out the reaction a 1-acyl-sn-glycero-3-phosphoethanolamine + an acyl-CoA = a 1,2-diacyl-sn-glycero-3-phosphoethanolamine + CoA. It catalyses the reaction a 1-acyl-sn-glycero-3-phosphocholine + an acyl-CoA = a 1,2-diacyl-sn-glycero-3-phosphocholine + CoA. The enzyme catalyses a 1-acyl-sn-glycero-3-phospho-L-serine + an acyl-CoA = a 1,2-diacyl-sn-glycero-3-phospho-L-serine + CoA. Its pathway is lipid metabolism; phospholipid metabolism. In terms of biological role, possesses acyl-CoA-dependent lysophospholipid acyltransferase activity with a subset of lysophospholipids as substrates. Exhibits strong acylation activity on lysophosphatidylethanolamine (LPE), and lower activity on lysophosphatidylcholine (LPC) and lysophosphatidylserine (LPS). Exhibits acylation activity on both LPE and LPC. Has a preference for 18:1-LPE over 16:0-LPE as acceptor. Palmitoyl-CoA (16:0-CoA) is a better acyl donor than oleoyl-CoA (18:1-CoA). Among several different acyl-CoA species the best acyl donor is eicosanoyl-CoA (20:0-CoA). Activity is calcium-independent. Its activity is essential for maintaining adequate levels of phosphatidylethanolamine (PE), LPE and LPC in the cells, which is crucial for plant growth regulation. This Arabidopsis thaliana (Mouse-ear cress) protein is Lysophospholipid acyltransferase LPEAT2.